The following is a 448-amino-acid chain: Probable D-serine dehydratase (448 aa).

N6-(pyridoxal phosphate)lysine is present on K119.

It belongs to the serine/threonine dehydratase family. DsdA subfamily. It depends on pyridoxal 5'-phosphate as a cofactor.

The catalysed reaction is D-serine = pyruvate + NH4(+). This is Probable D-serine dehydratase from Pseudomonas aeruginosa (strain ATCC 15692 / DSM 22644 / CIP 104116 / JCM 14847 / LMG 12228 / 1C / PRS 101 / PAO1).